Consider the following 323-residue polypeptide: UPF0612 protein C569.01c (323 aa).

2 coiled-coil regions span residues 27-63 (IKRYERSVDSTLLEIDENKREALEKYIEERDRKMKYE) and 131-225 (NEMN…DARS).

Belongs to the UPF0612 family.

This Schizosaccharomyces pombe (strain 972 / ATCC 24843) (Fission yeast) protein is UPF0612 protein C569.01c.